The primary structure comprises 411 residues: Tyrosine--tRNA ligase (411 aa).

Y34 lines the L-tyrosine pocket. The 'HIGH' region signature appears at C39–S48. 2 residues coordinate L-tyrosine: Y171 and Q175. Positions K231 to T235 match the 'KMSKS' region motif. K234 provides a ligand contact to ATP. An S4 RNA-binding domain is found at I345–V411.

It belongs to the class-I aminoacyl-tRNA synthetase family. TyrS type 1 subfamily. As to quaternary structure, homodimer.

The protein resides in the cytoplasm. It catalyses the reaction tRNA(Tyr) + L-tyrosine + ATP = L-tyrosyl-tRNA(Tyr) + AMP + diphosphate + H(+). Functionally, catalyzes the attachment of tyrosine to tRNA(Tyr) in a two-step reaction: tyrosine is first activated by ATP to form Tyr-AMP and then transferred to the acceptor end of tRNA(Tyr). In Rickettsia typhi (strain ATCC VR-144 / Wilmington), this protein is Tyrosine--tRNA ligase.